A 194-amino-acid polypeptide reads, in one-letter code: dTTP/UTP pyrophosphatase (194 aa).

The Proton acceptor role is filled by D77.

It belongs to the Maf family. YhdE subfamily. It depends on a divalent metal cation as a cofactor.

It is found in the cytoplasm. The catalysed reaction is dTTP + H2O = dTMP + diphosphate + H(+). It carries out the reaction UTP + H2O = UMP + diphosphate + H(+). Functionally, nucleoside triphosphate pyrophosphatase that hydrolyzes dTTP and UTP. May have a dual role in cell division arrest and in preventing the incorporation of modified nucleotides into cellular nucleic acids. The sequence is that of dTTP/UTP pyrophosphatase from Flavobacterium johnsoniae (strain ATCC 17061 / DSM 2064 / JCM 8514 / BCRC 14874 / CCUG 350202 / NBRC 14942 / NCIMB 11054 / UW101) (Cytophaga johnsonae).